The primary structure comprises 353 residues: Quinolinate synthase (353 aa).

2 residues coordinate iminosuccinate: His-47 and Ser-68. Residue Cys-113 coordinates [4Fe-4S] cluster. Iminosuccinate-binding positions include 139 to 141 (YAN) and Ser-156. Cys-200 is a [4Fe-4S] cluster binding site. Iminosuccinate contacts are provided by residues 226 to 228 (HPE) and Thr-243. Residue Cys-297 participates in [4Fe-4S] cluster binding.

The protein belongs to the quinolinate synthase family. Type 1 subfamily. The cofactor is [4Fe-4S] cluster.

The protein resides in the cytoplasm. It carries out the reaction iminosuccinate + dihydroxyacetone phosphate = quinolinate + phosphate + 2 H2O + H(+). The protein operates within cofactor biosynthesis; NAD(+) biosynthesis; quinolinate from iminoaspartate: step 1/1. Its function is as follows. Catalyzes the condensation of iminoaspartate with dihydroxyacetone phosphate to form quinolinate. The polypeptide is Quinolinate synthase (Serratia proteamaculans (strain 568)).